The chain runs to 2161 residues: SH3 and multiple ankyrin repeat domains protein 1 (2161 aa).

The tract at residues 1–53 (MTHSPATSEDEERHSASECPEGGSESDSSPDGPGRGPRGTRGQGSGAPGSLAS) is disordered. The segment covering 17-32 (SECPEGGSESDSSPDG) has biased composition (low complexity). A compositionally biased stretch (gly residues) spans 33 to 47 (PGRGPRGTRGQGSGA). Tyr186 carries the post-translational modification Phosphotyrosine. ANK repeat units follow at residues 212–245 (SGET…FRAR), 246–278 (DGMT…YKDR), 279–312 (RGLT…IADE), 313–345 (NGWQ…AQNA), 346–378 (SGNT…VKNN), and 379–395 (NGQT…NFEL). Disordered stretches follow at residues 412–433 (ESPK…VPPA) and 455–546 (GAAS…SRGR). A compositionally biased stretch (low complexity) spans 455–479 (GAASSGAPGPTSGSQGQSQPSAPTT). Residues 527-542 (PAGGTGGSGGPGGSLG) are compositionally biased toward gly residues. At Ser540 the chain carries Phosphoserine. Arg544 bears the Omega-N-methylarginine mark. The SH3 domain occupies 554-613 (VPGRSFMAVKSYQAQAEGEISLSKGEKIKVLSIGEGGFWEGQVKGRVGWFPSDCLEEVAN). The 95-residue stretch at 663–757 (TVLLQKKDSE…TLMVKVVMVT (95 aa)) folds into the PDZ domain. Phosphoserine occurs at positions 671 and 791. Residues 832 to 886 (TISASESPGPGGLASLGKHRPKGFFATESSFDPHHRAQPSYERPSFLPPGPGLML) are disordered. The residue at position 890 (Ser890) is a Phosphoserine. Disordered regions lie at residues 909–1229 (SRSL…LDFT), 1241–1289 (RREG…KSID), 1353–1720 (LGLA…GVAS), 1734–1785 (GQAF…PTSP), 1827–1860 (LPTA…QPQA), 1892–1983 (PWAR…TRHL), and 1996–2023 (RRAP…LPIL). The segment covering 920–939 (IPPPPTTSPPEPPYSTPPVP) has biased composition (pro residues). At Arg950 the chain carries Omega-N-methylarginine. The span at 996-1020 (AHHHPPHHHHHHAPPPQPHHHHAHP) shows a compositional bias: basic residues. An omega-N-methylarginine mark is found at Arg1051, Arg1090, and Arg1101. Residues 1127–1144 (PPAPSPTSPASPQPPPAV) are compositionally biased toward pro residues. The span at 1164 to 1181 (STSSSGRSSQGSSTEAEP) shows a compositional bias: low complexity. Residues 1199-1220 (SPAPAMSPVPPSPSPVPTPASP) are compositionally biased toward pro residues. The span at 1241–1252 (RREGGWQNEARR) shows a compositional bias: basic and acidic residues. Position 1253 is an asymmetric dimethylarginine (Arg1253). A Phosphoserine modification is found at Ser1287. Positions 1359 to 1368 (ARERALKESS) are enriched in basic and acidic residues. The segment covering 1374–1391 (PQPPPRPPSPRYEAPPPT) has biased composition (pro residues). Omega-N-methylarginine is present on Arg1423. Ser1436 bears the Phosphoserine mark. Composition is skewed to pro residues over residues 1517–1532 (GVPP…PSPT) and 1583–1609 (PLTP…PPPA). Residues 1618–1636 (DSTASSLTSYDSEVATLTQ) show a composition bias toward polar residues. The segment covering 1644–1670 (DPHPPGPPAPAAPAPAAPQPGPDPPPG) has biased composition (pro residues). Residues 1678-1688 (VDSRSSSDHPL) are compositionally biased toward basic and acidic residues. A compositionally biased stretch (low complexity) spans 1692 to 1702 (SSASTLSSLSA). Gly residues-rich tracts occupy residues 1703–1718 (EGGG…GAGV) and 1764–1774 (ASGGLRPGPSG). Low complexity predominate over residues 1775–1785 (GLRDPVTPTSP). Over residues 1844–1855 (PGPPPPPLPGPL) the composition is skewed to pro residues. Arg1895 is subject to Omega-N-methylarginine. Low complexity-rich tracts occupy residues 1917 to 1940 (SSLQ…VSSL), 1954 to 1980 (TGTG…STST), and 1996 to 2006 (RRAPSPSLLPA). Arg2016, Arg2036, and Arg2074 each carry omega-N-methylarginine. One can recognise an SAM domain in the interval 2098-2161 (WTKFDVADWL…DRALKFFLER (64 aa)).

It belongs to the SHANK family. As to quaternary structure, may homomultimerize via its SAM domain. Interacts with the C-terminus of SSTR2 via the PDZ domain. Interacts with IGSF9, SHARPIN, SPTAN1, HOMER1 and DLGAP1/GKAP isoforms 1 and 2. Part of a complex with DLG4/PSD-95 and DLGAP1/GKAP. Interacts with BAIAP2. Interacts with HOMER1 and HOMER3. In terms of tissue distribution, expressed in brain particularly in the amygdala, hippocampus, substantia nigra and thalamus. Isoform 2 seems to be expressed ubiquitously.

The protein localises to the cytoplasm. It is found in the postsynaptic density. The protein resides in the synapse. Functionally, seems to be an adapter protein in the postsynaptic density (PSD) of excitatory synapses that interconnects receptors of the postsynaptic membrane including NMDA-type and metabotropic glutamate receptors via complexes with GKAP/PSD-95 and Homer, respectively, and the actin-based cytoskeleton. Plays a role in the structural and functional organization of the dendritic spine and synaptic junction. The protein is SH3 and multiple ankyrin repeat domains protein 1 (SHANK1) of Homo sapiens (Human).